A 376-amino-acid chain; its full sequence is Chaperone protein DnaJ (376 aa).

A J domain is found at 5-70 (DYYEVLGVAR…NKRRAYDAHG (66 aa)). The CR-type zinc finger occupies 132-209 (GIERRIEIPT…CHGAGRVEEN (78 aa)). Cysteine 145, cysteine 148, cysteine 161, cysteine 164, cysteine 183, cysteine 186, cysteine 197, and cysteine 200 together coordinate Zn(2+). 4 CXXCXGXG motif repeats span residues 145-152 (CVSCHGSG), 161-168 (CGTCHGRG), 183-190 (CPHCDGRG), and 197-204 (CKTCHGAG).

This sequence belongs to the DnaJ family. As to quaternary structure, homodimer. Zn(2+) serves as cofactor.

The protein localises to the cytoplasm. Participates actively in the response to hyperosmotic and heat shock by preventing the aggregation of stress-denatured proteins and by disaggregating proteins, also in an autonomous, DnaK-independent fashion. Unfolded proteins bind initially to DnaJ; upon interaction with the DnaJ-bound protein, DnaK hydrolyzes its bound ATP, resulting in the formation of a stable complex. GrpE releases ADP from DnaK; ATP binding to DnaK triggers the release of the substrate protein, thus completing the reaction cycle. Several rounds of ATP-dependent interactions between DnaJ, DnaK and GrpE are required for fully efficient folding. Also involved, together with DnaK and GrpE, in the DNA replication of plasmids through activation of initiation proteins. The protein is Chaperone protein DnaJ of Xanthomonas oryzae pv. oryzae (strain PXO99A).